A 172-amino-acid chain; its full sequence is Envelope protein UL45 (172 aa).

Residues 1 to 27 (MPLRASEHAYRPLGPGTPPVRARLPAA) are Intravirion-facing. Residues 28–48 (AWVGVGTIIGGVVIIAALVLV) form a helical; Signal-anchor for type II membrane protein membrane-spanning segment. Residues 49 to 172 (PSRASWALSP…TSTRNALGLP (124 aa)) lie on the Virion surface side of the membrane.

Belongs to the herpesviridae HHV-1 UL45 family.

It is found in the virion membrane. Its function is as follows. Important virulence factor of HSV neurotropism. Seems to be required for glycoprotein B-induced fusion. Dispensable for growth in vitro. The chain is Envelope protein UL45 from Homo sapiens (Human).